The chain runs to 271 residues: PA-phosphatase related-family protein DDB_G0284367 (271 aa).

A run of 6 helical transmembrane segments spans residues 23 to 43, 68 to 88, 102 to 122, 150 to 170, 181 to 201, and 211 to 231; these read FLCL…IPPF, IVPV…VFIG, AALG…ILKV, FPSG…FYLC, GNIL…LVAV, and FSDI…VYFM.

The protein belongs to the PA-phosphatase related phosphoesterase family.

Its subcellular location is the membrane. The sequence is that of PA-phosphatase related-family protein DDB_G0284367 from Dictyostelium discoideum (Social amoeba).